A 307-amino-acid chain; its full sequence is MEGVVLLHKPKGMTSHDCVFKLRKILREKRIGHTGTLDPDVTGVLPICVGRATKIAQFLTSETKTYEGEVTLGFSTTTEDASGEVVETKYVDRVITRKEVEEALATLTGTIEQMPPMFSAVKVNGKKLYEYARAGQEVERPVRTITIHEFVLLDDREVFEGENISFRFRVTCSKGTYVRTLAVMIGEKLGFPSHMSHLVRTASGEFLLEDCISFEEIEENVQNGTVESIFISIDEALSKFPKMVVDEKQAEKIKNGMFLKNELQITAPFITVFDKNDRCLAIYEHHPKHPGMLKPMKVLVNNQELKL.

D38 functions as the Nucleophile in the catalytic mechanism.

It belongs to the pseudouridine synthase TruB family. Type 1 subfamily.

The enzyme catalyses uridine(55) in tRNA = pseudouridine(55) in tRNA. In terms of biological role, responsible for synthesis of pseudouridine from uracil-55 in the psi GC loop of transfer RNAs. The polypeptide is tRNA pseudouridine synthase B (Bacillus anthracis).